Here is a 472-residue protein sequence, read N- to C-terminus: Methylenetetrahydrofolate--tRNA-(uracil-5-)-methyltransferase TrmFO (472 aa).

Residue 10–15 coordinates FAD; it reads GGGLAG.

This sequence belongs to the MnmG family. TrmFO subfamily. It depends on FAD as a cofactor.

Its subcellular location is the cytoplasm. The catalysed reaction is uridine(54) in tRNA + (6R)-5,10-methylene-5,6,7,8-tetrahydrofolate + NADH + H(+) = 5-methyluridine(54) in tRNA + (6S)-5,6,7,8-tetrahydrofolate + NAD(+). It carries out the reaction uridine(54) in tRNA + (6R)-5,10-methylene-5,6,7,8-tetrahydrofolate + NADPH + H(+) = 5-methyluridine(54) in tRNA + (6S)-5,6,7,8-tetrahydrofolate + NADP(+). In terms of biological role, catalyzes the folate-dependent formation of 5-methyl-uridine at position 54 (M-5-U54) in all tRNAs. This chain is Methylenetetrahydrofolate--tRNA-(uracil-5-)-methyltransferase TrmFO, found in Mesorhizobium japonicum (strain LMG 29417 / CECT 9101 / MAFF 303099) (Mesorhizobium loti (strain MAFF 303099)).